The following is a 168-amino-acid chain: uncharacterized protein (168 aa).

The N-terminal 29 residues, 1-29 (MGWRFPSPSPRQASPVAPLLAAPTAVRSC), are a transit peptide targeting the mitochondrion. Basic and acidic residues predominate over residues 98 to 110 (GETKARRAREEGK). The tract at residues 98-152 (GETKARRAREEGKLPSLGNAPAPRRRSVAWPAAEGSCAAPESSPPASEASLPAPE) is disordered. The segment covering 128-152 (PAAEGSCAAPESSPPASEASLPAPE) has biased composition (low complexity).

It localises to the mitochondrion. This is an uncharacterized protein from Homo sapiens (Human).